A 295-amino-acid polypeptide reads, in one-letter code: UDP-N-acetylenolpyruvoylglucosamine reductase (295 aa).

The region spanning 23–188 (KVGGPADFLA…ISAKFALKPG (166 aa)) is the FAD-binding PCMH-type domain. Residue Arg167 is part of the active site. Catalysis depends on Ser217, which acts as the Proton donor. Glu287 is an active-site residue.

It belongs to the MurB family. The cofactor is FAD.

It is found in the cytoplasm. The catalysed reaction is UDP-N-acetyl-alpha-D-muramate + NADP(+) = UDP-N-acetyl-3-O-(1-carboxyvinyl)-alpha-D-glucosamine + NADPH + H(+). The protein operates within cell wall biogenesis; peptidoglycan biosynthesis. Cell wall formation. This Streptococcus pyogenes serotype M18 (strain MGAS8232) protein is UDP-N-acetylenolpyruvoylglucosamine reductase.